Reading from the N-terminus, the 863-residue chain is Leucine--tRNA ligase (863 aa).

Positions 42–53 (PYPSGSGLHVGH) match the 'HIGH' region motif. The 'KMSKS' region signature appears at 635 to 639 (KMSKS). Lysine 638 provides a ligand contact to ATP.

This sequence belongs to the class-I aminoacyl-tRNA synthetase family.

It is found in the cytoplasm. The enzyme catalyses tRNA(Leu) + L-leucine + ATP = L-leucyl-tRNA(Leu) + AMP + diphosphate. The chain is Leucine--tRNA ligase from Salinibacter ruber (strain DSM 13855 / M31).